A 615-amino-acid chain; its full sequence is Erythritol-mannosyl-transferase 1 (615 aa).

The tract at residues 366–387 (RTPNNTGASTPTAPISSPDFEE) is disordered. Residues 367-380 (TPNNTGASTPTAPI) show a composition bias toward polar residues.

Belongs to the UDP-glycosyltransferase family.

It is found in the vacuole membrane. The protein operates within secondary metabolite biosynthesis. Functionally, erythritol-mannosyl-transferase; part of the gene cluster that mediates the biosynthesis of mannosylerythritol lipids (MELs), surface-active substances that enhance the availability of water-insoluble substrates. Mannosylerythritol lipid production is responsible for hemolytic activity of Ustilago maydis. Depending on the number of acetyl groups, mannosylerythritol lipids can be differentiated into MEL A (fully acetylated), MEL B and MEL C (monoacetylated at R-6 and R-4, respectively), and the fully deacetylated MEL D. The first step in the pathway is the generation of mannosylerythritol by the glycosyltransferase EMT1 which catalyzes the transfer of GDP-mannose to the C-4 atom of meso-erythritol. This reaction has to be stereospecific, since only mannosyl-D-erythritol is generated. The produced disaccharide is subsequently acylated with fatty acids of various lengths derived from the peroxisomal beta-oxidation by the peroxisomal acyltransferases MAC1 and MAC2 at positions C-2 and C-3, repectively. The existence of MEL derivatives which carry an acetyl group at C-2 implies that at least MAC1 also accepts acetyl-CoA as a donor. The final step of MEL biosynthesis is the acetylation of the fully acylated mannosylerythritol lipids catalyzed by the acetyl-CoA-dependent acetyltransferase MAT1. MAT1 displays a relaxed regioselectivity and is able to transfer acetylgroups to both positions C-4 and C-6 of the mannosyl moiety. This chain is Erythritol-mannosyl-transferase 1, found in Mycosarcoma maydis (Corn smut fungus).